The chain runs to 195 residues: UPF0301 protein Bpro_1142 (195 aa).

This sequence belongs to the UPF0301 (AlgH) family.

The polypeptide is UPF0301 protein Bpro_1142 (Polaromonas sp. (strain JS666 / ATCC BAA-500)).